The chain runs to 267 residues: Shikimate dehydrogenase (NADP(+)) (267 aa).

Residues S14–S16 and T61 contribute to the shikimate site. The active-site Proton acceptor is the K65. Shikimate is bound by residues N86 and D101. Residues G126–A130, N150–K155, and L213 contribute to the NADP(+) site. Shikimate is bound at residue Y215. G236 serves as a coordination point for NADP(+).

The protein belongs to the shikimate dehydrogenase family. Homodimer.

The catalysed reaction is shikimate + NADP(+) = 3-dehydroshikimate + NADPH + H(+). It participates in metabolic intermediate biosynthesis; chorismate biosynthesis; chorismate from D-erythrose 4-phosphate and phosphoenolpyruvate: step 4/7. In terms of biological role, involved in the biosynthesis of the chorismate, which leads to the biosynthesis of aromatic amino acids. Catalyzes the reversible NADPH linked reduction of 3-dehydroshikimate (DHSA) to yield shikimate (SA). This is Shikimate dehydrogenase (NADP(+)) from Ruthia magnifica subsp. Calyptogena magnifica.